The following is a 348-amino-acid chain: Ephrin-4 (348 aa).

A signal peptide spans 1 to 20 (MKQFFEFLITTFLLLGLAAA). In terms of domain architecture, Ephrin RBD spans 21-178 (DEHIVYWNST…SQNMRLSMKV (158 aa)). N-linked (GlcNAc...) asparagine glycosylation is present at Asn28. 2 cysteine pairs are disulfide-bonded: Cys53-Cys91 and Cys79-Cys167. N-linked (GlcNAc...) asparagine glycosylation is present at Asn157. Positions 207–237 (GGQEDEDSDNDNAHLLPRDLEGSTNPKFRRP) are disordered. Residue Ser329 is the site of GPI-anchor amidated serine attachment. A propeptide spans 330-348 (STSLSTNFAILLAVIYVLY) (removed in mature form).

It belongs to the ephrin family. Interacts with lat-2. May undergo proteolysis by metalloprotease sup-17 to give rise to a soluble form.

It is found in the cell membrane. Regulates the formation or stabilization of cell-cell contacts at several stages of epithelial morphogenesis. In early embryonic development, involved in ventral closure of the epidermis. During male tail morphogenesis, regulates precursor cell sorting together with mab-20 and allows the formation of distinct sensory rays. Probably acts as a ligand for lad-2 to regulate axon guidance of several neurons including SDQL, SDQR, SMD and PLN neurons during neurogenesis. The protein is Ephrin-4 (efn-4) of Caenorhabditis elegans.